The sequence spans 699 residues: Elongation factor G (699 aa).

The region spanning 8–288 is the tr-type G domain; the sequence is EDYRNFGIMA…AVVDYLPSPL (281 aa). GTP-binding positions include 17–24, 86–90, and 140–143; these read AHIDAGKT, DTPGH, and NKMD.

It belongs to the TRAFAC class translation factor GTPase superfamily. Classic translation factor GTPase family. EF-G/EF-2 subfamily.

The protein localises to the cytoplasm. Catalyzes the GTP-dependent ribosomal translocation step during translation elongation. During this step, the ribosome changes from the pre-translocational (PRE) to the post-translocational (POST) state as the newly formed A-site-bound peptidyl-tRNA and P-site-bound deacylated tRNA move to the P and E sites, respectively. Catalyzes the coordinated movement of the two tRNA molecules, the mRNA and conformational changes in the ribosome. This is Elongation factor G from Rhizobium rhizogenes (strain K84 / ATCC BAA-868) (Agrobacterium radiobacter).